The chain runs to 221 residues: MILVLAEAALELVPESLWRHPAIVADARRRGKKPGEILLDRARHHVAMAKLDKAERRGRPDIVHQVLLAFQYSLLNRAGRGRAFVHTVGDYIISVKPETRVPKNYNNFVSLMEQLFKVGRVPPEGEALMEARRGSLAALLEELGGKWVALHEQGRAVSFAELGRAVADAVVVVGGFPHGDFENKWILEGAEAVYKIGNVSLDAAQAVCRAVAAAEAALGLI.

Residues Gly-174, Gly-179, and 196–201 (IGNVSL) contribute to the S-adenosyl-L-methionine site.

This sequence belongs to the class IV-like SAM-binding methyltransferase superfamily. RNA methyltransferase NEP1 family. In terms of assembly, homodimer.

It catalyses the reaction a pseudouridine in rRNA + S-adenosyl-L-methionine = an N(1)-methylpseudouridine in rRNA + S-adenosyl-L-homocysteine + H(+). Methyltransferase involved in ribosomal biogenesis. Specifically catalyzes the N1-methylation of the pseudouridine corresponding to position 914 in M.jannaschii 16S rRNA. This chain is Ribosomal RNA small subunit methyltransferase Nep1, found in Pyrobaculum calidifontis (strain DSM 21063 / JCM 11548 / VA1).